Consider the following 248-residue polypeptide: Ubiquinone biosynthesis O-methyltransferase (248 aa).

The S-adenosyl-L-methionine site is built by Arg-40, Gly-71, Asp-92, and Met-135.

This sequence belongs to the methyltransferase superfamily. UbiG/COQ3 family.

It carries out the reaction a 3-demethylubiquinol + S-adenosyl-L-methionine = a ubiquinol + S-adenosyl-L-homocysteine + H(+). The catalysed reaction is a 3-(all-trans-polyprenyl)benzene-1,2-diol + S-adenosyl-L-methionine = a 2-methoxy-6-(all-trans-polyprenyl)phenol + S-adenosyl-L-homocysteine + H(+). The protein operates within cofactor biosynthesis; ubiquinone biosynthesis. O-methyltransferase that catalyzes the 2 O-methylation steps in the ubiquinone biosynthetic pathway. The chain is Ubiquinone biosynthesis O-methyltransferase from Ruegeria pomeroyi (strain ATCC 700808 / DSM 15171 / DSS-3) (Silicibacter pomeroyi).